Reading from the N-terminus, the 833-residue chain is Leucine--tRNA ligase (833 aa).

Positions 41–52 (PYPSGAGLHVGH) match the 'HIGH' region motif. Residues 610–614 (KMSKS) carry the 'KMSKS' region motif. Lysine 613 contacts ATP.

This sequence belongs to the class-I aminoacyl-tRNA synthetase family.

The protein localises to the cytoplasm. It catalyses the reaction tRNA(Leu) + L-leucine + ATP = L-leucyl-tRNA(Leu) + AMP + diphosphate. In Streptococcus suis (strain 05ZYH33), this protein is Leucine--tRNA ligase.